The primary structure comprises 309 residues: Assembly-complementing factor 4 (309 aa).

Disordered stretches follow at residues 1–80 (MSED…ASPI), 164–240 (KSIN…ENTP), and 286–309 (VRSE…LFKR). Basic and acidic residues-rich tracts occupy residues 13–24 (ELHKLSIVDKHS) and 34–44 (KQHEVQPESKS). Phosphoserine is present on residues serine 44, serine 71, serine 74, serine 78, and serine 165. A compositionally biased stretch (polar residues) spans 61–80 (SSPQRSTTNQSPVSDHASPI). Composition is skewed to low complexity over residues 174 to 188 (NNNV…LPNR), 205 to 214 (PSRSSESTPT), and 222 to 239 (PRNT…GENT). Residues 287–298 (RSEDEDDEEFEP) are compositionally biased toward acidic residues. Serine 288 bears the Phosphoserine mark.

May be involved in actin cytoskeleton organization and biogenesis. This Saccharomyces cerevisiae (strain ATCC 204508 / S288c) (Baker's yeast) protein is Assembly-complementing factor 4 (ACF4).